Reading from the N-terminus, the 317-residue chain is Protein-L-isoaspartate O-methyltransferase (317 aa).

The active site involves Ser-59.

It belongs to the methyltransferase superfamily. L-isoaspartyl/D-aspartyl protein methyltransferase family. Monomer.

The protein resides in the cytoplasm. The enzyme catalyses [protein]-L-isoaspartate + S-adenosyl-L-methionine = [protein]-L-isoaspartate alpha-methyl ester + S-adenosyl-L-homocysteine. Its function is as follows. Catalyzes the methyl esterification of L-isoaspartyl residues in peptides and proteins that result from spontaneous decomposition of normal L-aspartyl and L-asparaginyl residues. It plays a role in the repair and/or degradation of damaged proteins. The polypeptide is Protein-L-isoaspartate O-methyltransferase (pcm) (Thermotoga maritima (strain ATCC 43589 / DSM 3109 / JCM 10099 / NBRC 100826 / MSB8)).